The sequence spans 82 residues: P2Y purinoceptor 2 (82 aa).

A helical membrane pass occupies residues 1–25 (LPLSYGVVCVLGLCLNVVALYIFLC). The Cytoplasmic portion of the chain corresponds to 26 to 35 (RLKTWNASTT). Residues 36–56 (YMFHLAVSDSLYAASLPLLVY) form a helical membrane-spanning segment. Over 57–75 (YYAQGDHWPFSTVLCKLVR) the chain is Extracellular. A helical transmembrane segment spans residues 76 to 82 (FLFYTNL).

This sequence belongs to the G-protein coupled receptor 1 family. In terms of tissue distribution, expressed in brain, heart, stria vascularis and vestibular labyrinth.

The protein resides in the cell membrane. Its function is as follows. Receptor for ATP and UTP coupled to G-proteins that activate a phosphatidylinositol-calcium second messenger system. Not activated by UDP. The sequence is that of P2Y purinoceptor 2 (P2RY2) from Meriones unguiculatus (Mongolian jird).